A 707-amino-acid polypeptide reads, in one-letter code: Polyribonucleotide nucleotidyltransferase (707 aa).

Residues Asp-486 and Asp-492 each contribute to the Mg(2+) site. The 60-residue stretch at 553–612 (PRIHKIKINPEKIKDVIGKGGSVIRMLTEETGTIIEIEDDGTIKISATIGEKAKNAIRRI) folds into the KH domain. The region spanning 622-690 (GRIYSGKVTR…RQGRLRLSIK (69 aa)) is the S1 motif domain.

The protein belongs to the polyribonucleotide nucleotidyltransferase family. As to quaternary structure, component of the RNA degradosome, which is a multiprotein complex involved in RNA processing and mRNA degradation. It depends on Mg(2+) as a cofactor.

The protein resides in the cytoplasm. It catalyses the reaction RNA(n+1) + phosphate = RNA(n) + a ribonucleoside 5'-diphosphate. Functionally, involved in mRNA degradation. Catalyzes the phosphorolysis of single-stranded polyribonucleotides processively in the 3'- to 5'-direction. This chain is Polyribonucleotide nucleotidyltransferase, found in Buchnera aphidicola subsp. Schizaphis graminum (strain Sg).